Here is a 665-residue protein sequence, read N- to C-terminus: tRNA 5-methylaminomethyl-2-thiouridine biosynthesis bifunctional protein MnmC (665 aa).

Positions 1–243 (MSQTSLHHAR…KREMLAGERA (243 aa)) are tRNA (mnm(5)s(2)U34)-methyltransferase. Positions 268–665 (IGGGIASAMT…RKLLKGKPLQ (398 aa)) are FAD-dependent cmnm(5)s(2)U34 oxidoreductase.

The protein in the N-terminal section; belongs to the methyltransferase superfamily. tRNA (mnm(5)s(2)U34)-methyltransferase family. In the C-terminal section; belongs to the DAO family. FAD serves as cofactor.

It is found in the cytoplasm. The enzyme catalyses 5-aminomethyl-2-thiouridine(34) in tRNA + S-adenosyl-L-methionine = 5-methylaminomethyl-2-thiouridine(34) in tRNA + S-adenosyl-L-homocysteine + H(+). Catalyzes the last two steps in the biosynthesis of 5-methylaminomethyl-2-thiouridine (mnm(5)s(2)U) at the wobble position (U34) in tRNA. Catalyzes the FAD-dependent demodification of cmnm(5)s(2)U34 to nm(5)s(2)U34, followed by the transfer of a methyl group from S-adenosyl-L-methionine to nm(5)s(2)U34, to form mnm(5)s(2)U34. The chain is tRNA 5-methylaminomethyl-2-thiouridine biosynthesis bifunctional protein MnmC from Aeromonas hydrophila subsp. hydrophila (strain ATCC 7966 / DSM 30187 / BCRC 13018 / CCUG 14551 / JCM 1027 / KCTC 2358 / NCIMB 9240 / NCTC 8049).